We begin with the raw amino-acid sequence, 376 residues long: Polycomb group protein FIE1 (376 aa).

WD repeat units follow at residues 85–127 (DKDE…LLKT), 130–170 (GHGD…CILI), 176–216 (GHRN…PYVE), 242–279 (VHSN…QSPG), 291–332 (VPEC…PVLT), and 339–376 (QCKS…HPKA).

The protein belongs to the WD repeat ESC family. In terms of assembly, interacts with EZ1. Component of the polycomb repressive complex 2 (PRC2), composed of the core PRC2 components EMF2B, EZ1 and CLF. PRC2 methylates 'Lys-27' residues of histone H3 (H3K27me3), leading to transcriptional repression of the affected target gene. Widely expressed.

Polycomb group (PcG) protein. PcG proteins act by forming multiprotein complexes, which are required to maintain the transcriptionally repressive state of homeotic genes throughout development. PcG proteins are not required to initiate repression, but to maintain it during later stages of development. They act via the methylation of histones, rendering chromatin heritably changed in its expressibility. Involved in the regulation of seed endosperm development, grain filling and seed dormancy. FIE2-containing PcG complex in seed endosperm regulates the expression of various transcription factors by trimethylation on histone H3 'Lys-27' (H3K27me3) of target genes. Involved in the overall expression regulation of a large number of nutrient metabolism genes. Involved in the regulation of seed endosperm development. Involved in the regulation of vegetative development, particularly in stem cell maintenance in the root system, where it maintains the suppression of key differentiation regulators. The polypeptide is Polycomb group protein FIE1 (Oryza sativa subsp. japonica (Rice)).